Consider the following 213-residue polypeptide: Orotate phosphoribosyltransferase (213 aa).

Residue K26 participates in 5-phospho-alpha-D-ribose 1-diphosphate binding. 34–35 contributes to the orotate binding site; sequence FF. 5-phospho-alpha-D-ribose 1-diphosphate is bound by residues 72–73, R99, K100, K103, H105, and 124–132; these read YK and DDVITAGTA. Orotate contacts are provided by T128 and R156.

Belongs to the purine/pyrimidine phosphoribosyltransferase family. PyrE subfamily. Homodimer. Mg(2+) is required as a cofactor.

The catalysed reaction is orotidine 5'-phosphate + diphosphate = orotate + 5-phospho-alpha-D-ribose 1-diphosphate. It participates in pyrimidine metabolism; UMP biosynthesis via de novo pathway; UMP from orotate: step 1/2. In terms of biological role, catalyzes the transfer of a ribosyl phosphate group from 5-phosphoribose 1-diphosphate to orotate, leading to the formation of orotidine monophosphate (OMP). This is Orotate phosphoribosyltransferase from Salmonella typhi.